Consider the following 408-residue polypeptide: 4-hydroxy-3-methylbut-2-en-1-yl diphosphate synthase (ferredoxin) (408 aa).

The segment covering 1 to 21 (MQTLPTPTTSSNTANQSTFDT) has biased composition (polar residues). Residues 1 to 26 (MQTLPTPTTSSNTANQSTFDTTIKRR) are disordered. [4Fe-4S] cluster is bound by residues Cys-317, Cys-320, Cys-351, and Glu-358.

This sequence belongs to the IspG family. [4Fe-4S] cluster serves as cofactor.

It catalyses the reaction (2E)-4-hydroxy-3-methylbut-2-enyl diphosphate + 2 oxidized [2Fe-2S]-[ferredoxin] + H2O = 2-C-methyl-D-erythritol 2,4-cyclic diphosphate + 2 reduced [2Fe-2S]-[ferredoxin] + H(+). The protein operates within isoprenoid biosynthesis; isopentenyl diphosphate biosynthesis via DXP pathway; isopentenyl diphosphate from 1-deoxy-D-xylulose 5-phosphate: step 5/6. In terms of biological role, converts 2C-methyl-D-erythritol 2,4-cyclodiphosphate (ME-2,4cPP) into 1-hydroxy-2-methyl-2-(E)-butenyl 4-diphosphate. This is 4-hydroxy-3-methylbut-2-en-1-yl diphosphate synthase (ferredoxin) from Trichormus variabilis (strain ATCC 29413 / PCC 7937) (Anabaena variabilis).